A 457-amino-acid chain; its full sequence is uncharacterized protein (457 aa).

An N6-(pyridoxal phosphate)lysine modification is found at K75.

Pyridoxal 5'-phosphate serves as cofactor.

This is an uncharacterized protein from Sinorhizobium fredii (strain NBRC 101917 / NGR234).